The following is a 363-amino-acid chain: Pyrimidine monooxygenase RutA (363 aa).

FMN-binding positions include 49–50, Asn-115, Glu-124, 140–141, and Ser-190; these read IK and RY.

It belongs to the NtaA/SnaA/DszA monooxygenase family. RutA subfamily.

The enzyme catalyses uracil + FMNH2 + NADH + O2 = (Z)-3-ureidoacrylate + FMN + NAD(+) + H2O + H(+). It catalyses the reaction thymine + FMNH2 + NADH + O2 = (Z)-2-methylureidoacrylate + FMN + NAD(+) + H2O + H(+). Functionally, catalyzes the pyrimidine ring opening between N-3 and C-4 by an unusual flavin hydroperoxide-catalyzed mechanism, adding oxygen atoms in the process to yield ureidoacrylate peracid, that immediately reacts with FMN forming ureidoacrylate and FMN-N(5)-oxide. The FMN-N(5)-oxide reacts spontaneously with NADH to produce FMN. Requires the flavin reductase RutF to regenerate FMN in vivo. The protein is Pyrimidine monooxygenase RutA of Pantoea ananatis (strain LMG 20103).